We begin with the raw amino-acid sequence, 507 residues long: Cobyric acid synthase (507 aa).

One can recognise a GATase cobBQ-type domain in the interval 251-448 (DIDIAVVHLP…LHGLFDSDAF (198 aa)). Cys-332 functions as the Nucleophile in the catalytic mechanism. His-440 is a catalytic residue.

It belongs to the CobB/CobQ family. CobQ subfamily.

It participates in cofactor biosynthesis; adenosylcobalamin biosynthesis. Catalyzes amidations at positions B, D, E, and G on adenosylcobyrinic A,C-diamide. NH(2) groups are provided by glutamine, and one molecule of ATP is hydrogenolyzed for each amidation. The sequence is that of Cobyric acid synthase from Klebsiella pneumoniae subsp. pneumoniae (strain ATCC 700721 / MGH 78578).